Consider the following 251-residue polypeptide: Gamma-glutamyl peptidase 5 (251 aa).

In terms of domain architecture, Glutamine amidotransferase type-1 spans 17–214; it reads STFVKKAYGG…IDRVVNLKLM (198 aa). The active-site Nucleophile is Cys-101. Catalysis depends on residues His-193 and Glu-195.

This sequence belongs to the peptidase C26 family.

The protein resides in the cytoplasm. It localises to the cytosol. It participates in secondary metabolite biosynthesis. Its function is as follows. Involved in glucosinolate biosynthesis. Hydrolyzes the gamma-glutamyl peptide bond of several glutathione (GSH) conjugates to produce Cys-Gly conjugates related to glucosinolates. The gamma-Glu-Cys-Gly-GSH conjugates are the sulfur-donating molecule in glucosinolate biosynthesis. The protein is Gamma-glutamyl peptidase 5 of Arabidopsis thaliana (Mouse-ear cress).